Here is a 466-residue protein sequence, read N- to C-terminus: Soluble pyridine nucleotide transhydrogenase (466 aa).

36–45 (ERYHNVGGGC) provides a ligand contact to FAD.

Belongs to the class-I pyridine nucleotide-disulfide oxidoreductase family. Requires FAD as cofactor.

The protein resides in the cytoplasm. The catalysed reaction is NAD(+) + NADPH = NADH + NADP(+). Its function is as follows. Conversion of NADPH, generated by peripheral catabolic pathways, to NADH, which can enter the respiratory chain for energy generation. The protein is Soluble pyridine nucleotide transhydrogenase of Klebsiella pneumoniae subsp. pneumoniae (strain ATCC 700721 / MGH 78578).